We begin with the raw amino-acid sequence, 413 residues long: Gamma-glutamyl phosphate reductase (413 aa).

It belongs to the gamma-glutamyl phosphate reductase family.

The protein resides in the cytoplasm. It carries out the reaction L-glutamate 5-semialdehyde + phosphate + NADP(+) = L-glutamyl 5-phosphate + NADPH + H(+). It participates in amino-acid biosynthesis; L-proline biosynthesis; L-glutamate 5-semialdehyde from L-glutamate: step 2/2. Functionally, catalyzes the NADPH-dependent reduction of L-glutamate 5-phosphate into L-glutamate 5-semialdehyde and phosphate. The product spontaneously undergoes cyclization to form 1-pyrroline-5-carboxylate. This is Gamma-glutamyl phosphate reductase from Caulobacter vibrioides (strain ATCC 19089 / CIP 103742 / CB 15) (Caulobacter crescentus).